Here is a 330-residue protein sequence, read N- to C-terminus: Methionyl-tRNA formyltransferase (330 aa).

121 to 124 (SLLP) provides a ligand contact to (6S)-5,6,7,8-tetrahydrofolate.

Belongs to the Fmt family.

It catalyses the reaction L-methionyl-tRNA(fMet) + (6R)-10-formyltetrahydrofolate = N-formyl-L-methionyl-tRNA(fMet) + (6S)-5,6,7,8-tetrahydrofolate + H(+). In terms of biological role, attaches a formyl group to the free amino group of methionyl-tRNA(fMet). The formyl group appears to play a dual role in the initiator identity of N-formylmethionyl-tRNA by promoting its recognition by IF2 and preventing the misappropriation of this tRNA by the elongation apparatus. This is Methionyl-tRNA formyltransferase from Burkholderia cenocepacia (strain ATCC BAA-245 / DSM 16553 / LMG 16656 / NCTC 13227 / J2315 / CF5610) (Burkholderia cepacia (strain J2315)).